A 360-amino-acid chain; its full sequence is Peptide chain release factor 1 (360 aa).

Q234 bears the N5-methylglutamine mark.

Belongs to the prokaryotic/mitochondrial release factor family. Post-translationally, methylated by PrmC. Methylation increases the termination efficiency of RF1.

It is found in the cytoplasm. Functionally, peptide chain release factor 1 directs the termination of translation in response to the peptide chain termination codons UAG and UAA. This is Peptide chain release factor 1 from Clostridium botulinum (strain Alaska E43 / Type E3).